A 235-amino-acid polypeptide reads, in one-letter code: uncharacterized protein (235 aa).

2 helical membrane-spanning segments follow: residues 167–187 (AFKL…LNEL) and 190–210 (LFAY…LLLW).

The protein localises to the membrane. This is an uncharacterized protein from Saccharomyces cerevisiae (strain ATCC 204508 / S288c) (Baker's yeast).